The primary structure comprises 2190 residues: Highly-reducing polyketide synthase 1 (2190 aa).

The 426-residue stretch at 6–431 (LTPVAIVGYA…GANAHVVLGA (426 aa)) folds into the Ketosynthase family 3 (KS3) domain. Residues Cys179, His315, and His355 each act as for beta-ketoacyl synthase activity in the active site. Residues 541–857 (FVFTGQGAQW…VSVLARGQNA (317 aa)) form the Malonyl-CoA:ACP transacylase (MAT) domain. Positions 925 to 1061 (NDLLGSLADW…GLVGVRNSPA (137 aa)) are N-terminal hotdog fold. Residues 925–1246 (NDLLGSLADW…MTPLRESSGS (322 aa)) form the PKS/mFAS DH domain. His957 serves as the catalytic Proton acceptor; for dehydratase activity. A C-terminal hotdog fold region spans residues 1089 to 1246 (TETVDVQAMY…MTPLRESSGS (158 aa)). The Proton donor; for dehydratase activity role is filled by Asp1154. The Enoyl reductase (ER) domain maps to 1494-1804 (GSLDSFYFVD…SGKSMGKLVI (311 aa)). The Ketoreductase (KR) domain maps to 1828-2005 (ASYLIVGGTG…GTSLDLTAVS (178 aa)). Residues 2107 to 2184 (KALEVLYGAL…ELAKLISKKS (78 aa)) enclose the Carrier domain. Residue Ser2144 is modified to O-(pantetheine 4'-phosphoryl)serine.

The cofactor is pantetheine 4'-phosphate.

Functionally, highly-reducing polyketide synthase; part of the gene cluster that mediates the biosynthesis of liamocins, glycolipids (also called heavy oils) composed of a single mannitol or arabitol headgroup linked to either three, four or even six 3,5-dihydroxydecanoic ester tail-groups. Within the pathway, PKS1 is responsible for biosynthesis of 3,5-dihydroxydecanoic acid from acetyl-CoA and malonyl-CoA. A phosphopantetheine transferase (PPTase) activates the HR-PKS. The esterase EST1 then catalyzes ester bond formation between 3,5-dihydroxydecanoic acid and mannitol (provided by the mannitol-1-phosphate 5-dehydrogenase and the NADP-dependent mannitol dehydrogenase) or arabinol (provided by the L-arabinitol 4-dehydrogenase). The chain is Highly-reducing polyketide synthase 1 from Aureobasidium melanogenum (Aureobasidium pullulans var. melanogenum).